The primary structure comprises 495 residues: Glutamyl-tRNA(Gln) amidotransferase subunit A (495 aa).

Residues Lys-75 and Ser-150 each act as charge relay system in the active site. Ser-174 serves as the catalytic Acyl-ester intermediate.

This sequence belongs to the amidase family. GatA subfamily. As to quaternary structure, heterotrimer of A, B and C subunits.

It catalyses the reaction L-glutamyl-tRNA(Gln) + L-glutamine + ATP + H2O = L-glutaminyl-tRNA(Gln) + L-glutamate + ADP + phosphate + H(+). Its function is as follows. Allows the formation of correctly charged Gln-tRNA(Gln) through the transamidation of misacylated Glu-tRNA(Gln) in organisms which lack glutaminyl-tRNA synthetase. The reaction takes place in the presence of glutamine and ATP through an activated gamma-phospho-Glu-tRNA(Gln). This Paraburkholderia phytofirmans (strain DSM 17436 / LMG 22146 / PsJN) (Burkholderia phytofirmans) protein is Glutamyl-tRNA(Gln) amidotransferase subunit A.